The sequence spans 457 residues: Transcription factor PCF7 (457 aa).

Residues 58 to 84 are a coiled coil; that stretch reads STLHYLLQEKERAQQAHEQLQIYQQQQ. The disordered stretch occupies residues 95–119; the sequence is RQPASRGPGGGGGGGDGGGSSGEST. Residues 101–115 show a composition bias toward gly residues; sequence GPGGGGGGGDGGGSS. The TCP domain occupies 140–198; that stretch reads RKDRHSKVCTARGLRDRRVRLAAHTAIRFYDVQDRLGYDRPSKAVDWLMRNAKAAIDEL. Disordered regions lie at residues 199 to 231 and 263 to 299; these read PDRAEAPPPPAAASTEQPEATEQATSTSYGFGN and KSLFPSSSTASGAASAGHDEYRGSPPDLLSRTTSNQQ. Composition is skewed to low complexity over residues 210-225 and 268-278; these read AASTEQPEATEQATST and SSSTASGAASA.

As to quaternary structure, forms homodimers and heterodimers.

Its subcellular location is the nucleus. In terms of biological role, transcription activator. Binds the promoter core sequence 5'-GGNCC-3'. The protein is Transcription factor PCF7 (PCF7) of Oryza sativa subsp. japonica (Rice).